Reading from the N-terminus, the 199-residue chain is Protein-methionine-sulfoxide reductase heme-binding subunit MsrQ (199 aa).

The next 5 membrane-spanning stretches (helical) occupy residues 10 to 30, 79 to 99, 118 to 138, 147 to 167, and 169 to 189; these read WLKV…ILSV, LLGL…SVLE, LTLG…STLW, WQKL…HYLW, and VKTL…LLAL.

It belongs to the MsrQ family. Heterodimer of a catalytic subunit (MsrP) and a heme-binding subunit (MsrQ). It depends on FMN as a cofactor. The cofactor is heme b.

The protein resides in the cell inner membrane. Functionally, part of the MsrPQ system that repairs oxidized periplasmic proteins containing methionine sulfoxide residues (Met-O), using respiratory chain electrons. Thus protects these proteins from oxidative-stress damage caused by reactive species of oxygen and chlorine generated by the host defense mechanisms. MsrPQ is essential for the maintenance of envelope integrity under bleach stress, rescuing a wide series of structurally unrelated periplasmic proteins from methionine oxidation. MsrQ provides electrons for reduction to the reductase catalytic subunit MsrP, using the quinone pool of the respiratory chain. This is Protein-methionine-sulfoxide reductase heme-binding subunit MsrQ from Yersinia enterocolitica serotype O:8 / biotype 1B (strain NCTC 13174 / 8081).